Consider the following 59-residue polypeptide: uncharacterized protein (59 aa).

Residues 1–21 form the signal peptide; that stretch reads MYLFYVLLSSLFLSALIYVIG. Over 22-24 the chain is Extracellular; it reads KSH. The chain crosses the membrane as a helical span at residues 25 to 45; sequence PNLFMFISLFVNVVTILYLVF. Residues 46 to 59 are Cytoplasmic-facing; that stretch reads KDYGQYIIAKPINT.

It is found in the host membrane. This is an uncharacterized protein from Acidianus convivator (ABV).